Here is a 184-residue protein sequence, read N- to C-terminus: Peptide deformylase (184 aa).

2 residues coordinate Fe cation: Cys99 and His141. Residue Glu142 is part of the active site. His145 contributes to the Fe cation binding site.

The protein belongs to the polypeptide deformylase family. Fe(2+) serves as cofactor.

It catalyses the reaction N-terminal N-formyl-L-methionyl-[peptide] + H2O = N-terminal L-methionyl-[peptide] + formate. Functionally, removes the formyl group from the N-terminal Met of newly synthesized proteins. Requires at least a dipeptide for an efficient rate of reaction. N-terminal L-methionine is a prerequisite for activity but the enzyme has broad specificity at other positions. This Chlamydia abortus (strain DSM 27085 / S26/3) (Chlamydophila abortus) protein is Peptide deformylase.